The primary structure comprises 423 residues: E3 ubiquitin-protein ligase makorin-2 (423 aa).

2 consecutive C3H1-type zinc fingers follow at residues 2-29 and 31-58; these read STKQVTCRYFLHGVCREGSRCLFSHDLN and SKPSTICKFYQRGVCAYGERCRYDHIKP. A disordered region spans residues 59 to 90; that stretch reads SSRGGGGGAPEDQAGGGGAGGGGAGIGGAGGG. Gly residues predominate over residues 61–90; it reads RGGGGGAPEDQAGGGGAGGGGAGIGGAGGG. The C3H1-type 3 zinc-finger motif lies at 162–189; it reads QNLPQLCPYAANGHCFYEENCTYLHGDL. The makorin-type Cys-His stretch occupies residues 190-219; it reads CEVCGLQVLHPHDSEQRRAHEKMCLAAFEA. The segment at 235–289 adopts an RING-type zinc-finger fold; sequence CSICMEVVVQKANPSDRRFGILSSCCHTFCLACIRKWRCTRTFSNTIIKSCPECR. The segment at 318 to 347 adopts a C3H1-type 4 zinc-finger fold; that stretch reads GVSKKACKYFDQGRGSCPFGGKCLYLHAFP.

Its subcellular location is the cytoplasm. It localises to the nucleus. It catalyses the reaction S-ubiquitinyl-[E2 ubiquitin-conjugating enzyme]-L-cysteine + [acceptor protein]-L-lysine = [E2 ubiquitin-conjugating enzyme]-L-cysteine + N(6)-ubiquitinyl-[acceptor protein]-L-lysine.. It functions in the pathway protein modification; protein ubiquitination. Functionally, E3 ubiquitin ligase catalyzing the covalent attachment of ubiquitin moieties onto substrate proteins. Inhibits neurogenesis and axis formation during embryonic development by modulating the phosphatidylinositol 3-kinase (PI3K) pathway. Acts downstream of PI3K and akt1 to up-regulate gsk3b mRNA expression. The sequence is that of E3 ubiquitin-protein ligase makorin-2 (mkrn2) from Seriola quinqueradiata (Five-ray yellowtail).